The chain runs to 204 residues: Small ribosomal subunit protein uS4 (204 aa).

The 64-residue stretch at 93 to 156 folds into the S4 RNA-binding domain; that stretch reads SRLSSVLYHS…AKIPVIVEAV (64 aa).

Belongs to the universal ribosomal protein uS4 family. As to quaternary structure, part of the 30S ribosomal subunit. Contacts protein S5. The interaction surface between S4 and S5 is involved in control of translational fidelity.

Its function is as follows. One of the primary rRNA binding proteins, it binds directly to 16S rRNA where it nucleates assembly of the body of the 30S subunit. In terms of biological role, with S5 and S12 plays an important role in translational accuracy. This is Small ribosomal subunit protein uS4 from Wolbachia sp. subsp. Brugia malayi (strain TRS).